The chain runs to 368 residues: Phospho-N-acetylmuramoyl-pentapeptide-transferase (368 aa).

10 consecutive transmembrane segments (helical) span residues 31-51, 73-93, 98-118, 134-154, 175-195, 213-233, 249-269, 271-291, 296-316, and 345-365; these read LTSM…LYGL, TMGG…WGNL, VILL…DDYM, FILS…YTGT, GPVI…IIGS, VLIS…PIVA, VFLS…AHPA, VFMG…IVIL, ILLL…ILQV, and KIVI…LSTL.

This sequence belongs to the glycosyltransferase 4 family. MraY subfamily. The cofactor is Mg(2+).

The protein localises to the cell inner membrane. The enzyme catalyses UDP-N-acetyl-alpha-D-muramoyl-L-alanyl-gamma-D-glutamyl-meso-2,6-diaminopimeloyl-D-alanyl-D-alanine + di-trans,octa-cis-undecaprenyl phosphate = di-trans,octa-cis-undecaprenyl diphospho-N-acetyl-alpha-D-muramoyl-L-alanyl-D-glutamyl-meso-2,6-diaminopimeloyl-D-alanyl-D-alanine + UMP. It functions in the pathway cell wall biogenesis; peptidoglycan biosynthesis. Functionally, catalyzes the initial step of the lipid cycle reactions in the biosynthesis of the cell wall peptidoglycan: transfers peptidoglycan precursor phospho-MurNAc-pentapeptide from UDP-MurNAc-pentapeptide onto the lipid carrier undecaprenyl phosphate, yielding undecaprenyl-pyrophosphoryl-MurNAc-pentapeptide, known as lipid I. This Leptospira interrogans serogroup Icterohaemorrhagiae serovar copenhageni (strain Fiocruz L1-130) protein is Phospho-N-acetylmuramoyl-pentapeptide-transferase.